The sequence spans 129 residues: Small ribosomal subunit protein uS11 (129 aa).

It belongs to the universal ribosomal protein uS11 family. As to quaternary structure, part of the 30S ribosomal subunit. Interacts with proteins S7 and S18. Binds to IF-3.

In terms of biological role, located on the platform of the 30S subunit, it bridges several disparate RNA helices of the 16S rRNA. Forms part of the Shine-Dalgarno cleft in the 70S ribosome. The polypeptide is Small ribosomal subunit protein uS11 (Geobacillus stearothermophilus (Bacillus stearothermophilus)).